A 551-amino-acid chain; its full sequence is Urocanate hydratase (551 aa).

Residues 48–49 (GG), Gln126, 172–174 (GMG), Glu192, Arg197, 238–239 (NA), 259–263 (QTSAH), 269–270 (YI), and Tyr318 contribute to the NAD(+) site. Cys406 is an active-site residue. Residue Gly488 coordinates NAD(+).

Belongs to the urocanase family. It depends on NAD(+) as a cofactor.

It is found in the cytoplasm. The catalysed reaction is 4-imidazolone-5-propanoate = trans-urocanate + H2O. It functions in the pathway amino-acid degradation; L-histidine degradation into L-glutamate; N-formimidoyl-L-glutamate from L-histidine: step 2/3. Catalyzes the conversion of urocanate to 4-imidazolone-5-propionate. In Symbiobacterium thermophilum (strain DSM 24528 / JCM 14929 / IAM 14863 / T), this protein is Urocanate hydratase.